The sequence spans 436 residues: Chorion-specific transcription factor GCMa (436 aa).

The segment at residues 14–169 (LSWDINDVKL…KLEAEARRAM (156 aa)) is a DNA-binding region (GCM). Residues cysteine 76, cysteine 82, cysteine 86, cysteine 113, cysteine 116, cysteine 125, histidine 152, and histidine 154 each coordinate Zn(2+). Positions 171–202 (KVNTAPSSVSLSLKGSTETRSLPGETQSQGSL) are disordered. A compositionally biased stretch (polar residues) spans 174–202 (TAPSSVSLSLKGSTETRSLPGETQSQGSL).

Post-translationally, polyubiquitinated in the presence of UBE2D2 and FBXW2 (in vitro). As to expression, highly expressed in the placenta. Expressed in trophoblast cells of the villi.

Its subcellular location is the nucleus. Its function is as follows. Transcription factor involved in the control of expression of placental growth factor (PGF) and other placenta-specific genes. Binds to the trophoblast-specific element 2 (TSE2) of the aromatase gene enhancer. Binds to the SYDE1 promoter. Has a central role in mediating the differentiation of trophoblast cells along both the villous and extravillous pathways in placental development. The protein is Chorion-specific transcription factor GCMa (GCM1) of Homo sapiens (Human).